A 407-amino-acid polypeptide reads, in one-letter code: Biflaviolin synthase CYP158A1 (407 aa).

Residues 1–11 (MTQETTTLTGQ) show a composition bias toward polar residues. Positions 1–20 (MTQETTTLTGQSPPPVRDWP) are disordered. Flaviolin-binding positions include R92, Y199, and 290 to 291 (HR). Position 356 (C356) interacts with heme.

This sequence belongs to the cytochrome P450 family. Requires heme as cofactor.

It catalyses the reaction 2 flaviolin + 2 reduced [2Fe-2S]-[ferredoxin] + O2 + H(+) = 3,3'-biflaviolin + 2 oxidized [2Fe-2S]-[ferredoxin] + 2 H2O. The enzyme catalyses 2 flaviolin + 2 reduced [2Fe-2S]-[ferredoxin] + O2 + H(+) = 3,8'-biflaviolin + 2 oxidized [2Fe-2S]-[ferredoxin] + 2 H2O. It functions in the pathway pigment biosynthesis. Its function is as follows. Catalyzes oxidative C-C coupling reaction to polymerize flaviolin and form highly conjugated pigments which protect the soil bacterium from deleterious effects of UV irradiation (two isomers of biflaviolin and one triflaviolin). The protein is Biflaviolin synthase CYP158A1 of Streptomyces coelicolor (strain ATCC BAA-471 / A3(2) / M145).